A 71-amino-acid polypeptide reads, in one-letter code: Small ribosomal subunit protein bS21 (71 aa).

The protein belongs to the bacterial ribosomal protein bS21 family.

This is Small ribosomal subunit protein bS21 from Blochmanniella pennsylvanica (strain BPEN).